The chain runs to 291 residues: Foldase protein PrsA 2 (291 aa).

Residues M1–A20 form the signal peptide. Residue C21 is the site of N-palmitoyl cysteine attachment. A lipid anchor (S-diacylglycerol cysteine) is attached at C21. Positions Q135–K226 constitute a PpiC domain.

The protein belongs to the PrsA family.

The protein resides in the cell membrane. It catalyses the reaction [protein]-peptidylproline (omega=180) = [protein]-peptidylproline (omega=0). Plays a major role in protein secretion by helping the post-translocational extracellular folding of several secreted proteins. The protein is Foldase protein PrsA 2 (prsA2) of Listeria innocua serovar 6a (strain ATCC BAA-680 / CLIP 11262).